We begin with the raw amino-acid sequence, 274 residues long: Bis(5'-nucleosyl)-tetraphosphatase, symmetrical (274 aa).

The protein belongs to the Ap4A hydrolase family.

The enzyme catalyses P(1),P(4)-bis(5'-adenosyl) tetraphosphate + H2O = 2 ADP + 2 H(+). Its function is as follows. Hydrolyzes diadenosine 5',5'''-P1,P4-tetraphosphate to yield ADP. In Buchnera aphidicola subsp. Acyrthosiphon pisum (strain 5A), this protein is Bis(5'-nucleosyl)-tetraphosphatase, symmetrical.